A 216-amino-acid chain; its full sequence is Ribose-5-phosphate isomerase A (216 aa).

Substrate is bound by residues 26 to 29, 79 to 82, and 92 to 95; these read TGST, DGAD, and KGGG. Glu101 functions as the Proton acceptor in the catalytic mechanism. Substrate is bound at residue Lys119.

The protein belongs to the ribose 5-phosphate isomerase family. As to quaternary structure, homodimer.

It carries out the reaction aldehydo-D-ribose 5-phosphate = D-ribulose 5-phosphate. It participates in carbohydrate degradation; pentose phosphate pathway; D-ribose 5-phosphate from D-ribulose 5-phosphate (non-oxidative stage): step 1/1. Catalyzes the reversible conversion of ribose-5-phosphate to ribulose 5-phosphate. This Legionella pneumophila (strain Paris) protein is Ribose-5-phosphate isomerase A.